Consider the following 801-residue polypeptide: Na(+)/H(+) antiporter subunit A1 (801 aa).

Helical transmembrane passes span 1–21 (MSLL…IPFL), 30–50 (LGWF…SLIS), 79–99 (LGLL…LYSI), 117–137 (LFMG…LYLF), 166–186 (LIIT…LSLA), 206–226 (PFFI…SAQV), 228–250 (FYIW…HSAT), 265–285 (IFAI…ITLF), 300–320 (ILAF…GIGA), 337–357 (FVAA…LFMI), 373–393 (LGGL…TTLS), 427–447 (LGIL…VYSI), 472–492 (ILML…GLFP), 522–542 (GITP…LLLI), 591–611 (LVII…SVPF), 623–643 (VFEG…IFAK), 646–666 (LFSI…FIFF), 671–691 (LALT…LCFY), 707–727 (LTNA…GLIG), and 764–784 (MDTL…YTMI).

This sequence belongs to the CPA3 antiporters (TC 2.A.63) subunit A family. In terms of assembly, may form a heterooligomeric complex that consists of seven subunits: mnhA1, mnhB1, mnhC1, mnhD1, mnhE1, mnhF1 and mnhG1.

The protein localises to the cell membrane. In terms of biological role, mnh complex is a Na(+)/H(+) antiporter involved in Na(+) excretion. The chain is Na(+)/H(+) antiporter subunit A1 (mnhA1) from Staphylococcus epidermidis (strain ATCC 35984 / DSM 28319 / BCRC 17069 / CCUG 31568 / BM 3577 / RP62A).